Here is a 194-residue protein sequence, read N- to C-terminus: Imidazoleglycerol-phosphate dehydratase (194 aa).

This sequence belongs to the imidazoleglycerol-phosphate dehydratase family.

The protein localises to the cytoplasm. It catalyses the reaction D-erythro-1-(imidazol-4-yl)glycerol 3-phosphate = 3-(imidazol-4-yl)-2-oxopropyl phosphate + H2O. It participates in amino-acid biosynthesis; L-histidine biosynthesis; L-histidine from 5-phospho-alpha-D-ribose 1-diphosphate: step 6/9. This is Imidazoleglycerol-phosphate dehydratase from Thermus thermophilus (strain ATCC 27634 / DSM 579 / HB8).